A 229-amino-acid polypeptide reads, in one-letter code: UPF0173 metal-dependent hydrolase SAR1785 (229 aa).

The protein belongs to the UPF0173 family.

The sequence is that of UPF0173 metal-dependent hydrolase SAR1785 from Staphylococcus aureus (strain MRSA252).